Reading from the N-terminus, the 125-residue chain is Prepro-urotensin II-gamma (125 aa).

Positions 1–21 (MMCNLLLSCSVLLLSCSHLLA) are cleaved as a signal peptide. A propeptide spanning residues 109-111 (QFR) is cleaved from the precursor. An intrachain disulfide couples C119 to C124.

The protein belongs to the urotensin-2 family.

It is found in the secreted. Urotensin is found in the teleost caudal neurosecretory system. It has a suggested role in osmoregulation and as a corticotropin-releasing factor. The non-hormonal portion of this precursor may be a urotensin binding protein, urophysin. This is Prepro-urotensin II-gamma from Cyprinus carpio (Common carp).